The chain runs to 2249 residues: Endoribonuclease Dcr-1 (2249 aa).

Residues 1–371 are essential for miRNA substrate recognition; it reads MAFHWCDNNL…SPKVRRLLQT (371 aa). Residues 1 to 690 form an important for interaction with loqs isoform PB (loqs-PB) region; the sequence is MAFHWCDNNL…SKQPPTACDI (690 aa). A helicase domain region spans residues 1 to 761; that stretch reads MAFHWCDNNL…AEIDTAHSLA (761 aa). Positions 1 to 1042 are necessary for processing certain pre-miRNas, such as pre-let 7 and pre-bantam; it reads MAFHWCDNNL…VSLELAKERV (1042 aa). 37–44 provides a ligand contact to ATP; the sequence is LGHRSSKE. Positions 371 to 491 are dispensable for activity and substrate recognition; it reads TLRCFKPEEV…HHRDHNDGSD (121 aa). A disordered region spans residues 436 to 486; sequence TTEDRQTNRSAARVTPTPTPAHAKPKPSSGANTAQPRTRRRVYTRRHHRDH. Over residues 472–484 the composition is skewed to basic residues; the sequence is RTRRRVYTRRHHR. A Helicase C-terminal domain is found at 485 to 648; sequence DHNDGSDTLC…TGDTTEADSD (164 aa). The essential for miRNA substrate recognition stretch occupies residues 496–606; that stretch reads LIYCNQNHTA…VQCKGRARAA (111 aa). A dispensable for activity and substrate recognition region spans residues 617 to 761; it reads SYKSPTVGSV…AEIDTAHSLA (145 aa). 2 disordered regions span residues 640 to 665 and 705 to 757; these read GDTT…PYTF and LDTS…IDTA. A compositionally biased stretch (low complexity) spans 716-726; it reads SMSNTSPSESS. In terms of domain architecture, Dicer dsRNA-binding fold spans 825–920; that stretch reads AIALVNKYCA…QPIGKEGFRA (96 aa). The tract at residues 924–957 is wing domain; sequence DWECFELEPEDEQIVQLSDEPRPGTTKRRQYYYK. The segment at 963-1108 is platform domain; sequence FCDCRPVAGA…WQFLELIQAN (146 aa). Residues 1100-1246 enclose the PAZ domain; that stretch reads QFLELIQANG…LVPELCTVHP (147 aa). Residues 1147–2249 form an essential for production of mature miRNAs from pre-miRNAs. Also important for proper formation of the siRISC complex but is dispensable for biogenesis of siRNAs region; the sequence is QYFYVAEICP…KKQGLIAKKD (1103 aa). The disordered stretch occupies residues 1314–1351; the sequence is ESKQKESLKDDTINGKDLADVEKKPTSEETQLDKDSKD. The residue at position 1423 (Ser1423) is a Phosphoserine. Positions 1426–1477 are disordered; it reads FWDVSNGESGFKGPKSSQNKQGGKGKAKGPAKPTFNYYDSDNSLGSSYDDDD. The span at 1437–1446 shows a compositional bias: low complexity; that stretch reads KGPKSSQNKQ. The segment covering 1462–1471 has biased composition (polar residues); sequence YYDSDNSLGS. 2 consecutive RNase III domains span residues 1698–1919 and 1993–2150; these read ITSA…IECG and FEEF…LDSN. Residues Glu1745 and Asp1749 each contribute to the Mg(2+) site. Phosphoserine occurs at positions 1877 and 1880. Mg(2+)-binding residues include Asp1905, Glu1908, Glu2032, Asp2136, and Glu2139. The region spanning 2175–2241 is the DRBM domain; the sequence is VPKSPIRELL…AKCALRQLKK (67 aa).

Belongs to the helicase family. Dicer subfamily. In terms of assembly, component of the miRNA-directed RISC loading complex (miRLC), composed of at least Dcr-1, AGO1 and loqs, which processes pre-miRNAs and loads the resulting miRNAs into the Argonaute 1 (AGO1)-containing RNA-induced silencing complex (miRISC). Interacts (via helicase domain) with dicing cofactor loqs isoform-PB (loqs-PB) (via DRBM 3 domain); this interaction enhances processing of pre-miRNAs by increasing substrate binding affinity of the dicer. Also able to interact with loqs isoforms PA and PC, however the relevance of such interactions are unclear in vivo. Different regions of the Dcr-1-loqs-PB heterodimer collaborate to recognize, bind and position the pre-miRNA for Dcr-1 mediated cleavage. In the absence of authentic miRNA substrates, the heterodimer favors a closed, catalytically incompetent, conformation, whereas binding of authentic pre-miRNA substrates stabilizes the relatively rare open, catalytically competent, conformation of the heterodimer. During substrate recognition, the Dcr-1 PAZ domain and pre-miRNA interact with the DRBM 1 domain of loqs-PB, which likely contributes to substrate recognition and stabilization. At the miRNA binding stage, the Dcr-1 DRBM domain and loqs-PB DRBM domains then bind the pre-miRNA in tandem to form a tight 'belt' around the pre-miRNA stem, the pre-miRNA loop is docked in the loop-binding region formed by DUF283, DRBM and part of the N terminus of Dcr-1, and the loqs-PB DRBM 1 and the wing domain of Dcr-1 act together to bind the 5' and 3' pre-miRNA termini within the PAZ and platform domains of Dcr-1. These interactions between the proteins and their pre-miRNA substrate stabilize a distorted form of the pre-miRNA and position the scissile phosphodiester bonds of the pre-miRNA at the RNase III catalytic cleavage sites of Dcr-1. Following Dcr-1 mediated cleavage, the miRNA duplex remains bound to loqs-PB DRBM 1, which dissociates from the Dcr-1 RNase III 1 domain but remains in contact with the PAZ and wing domains, suggesting that the heterodimer presents the mature miRNA to Ago2 for loading into the RNA-induced silencing complex (miRISC). Interacts with AGO2 and Fmr1 to form a RNA-induced silencing complex (siRISC), a ribonucleoprotein (RNP) complex involved in translation regulation; other components of the complex are RpL5, RpL11, AGO2 and Rm62. Interacts with piwi and vas; these interactions occur in the polar granules. Requires Mg(2+) as cofactor. The cofactor is Mn(2+).

Its subcellular location is the cytoplasm. It localises to the cytosol. The enzyme catalyses Endonucleolytic cleavage to 5'-phosphomonoester.. With respect to regulation, activity towards pre-miRNAs is not inhibited by inorganic phosphate. Its function is as follows. Endoribonuclease which functions in microRNA- (miRNA) gene silencing and, independently of its ribonuclease III activity, also acts in the short interfering RNA- (siRNA) gene silencing pathway. Cleaves hairpin precursor miRNAs (pre-miRNA) to generate mature miRNAs (miRNAs) that are between twenty-one to twenty-four nucleotides in length and function in RNA silencing and post-transcriptional regulation of gene expression. Also functions in miRNA loading and assembly of the Argonaute 1 (AGO1)-containing RNA-induced silencing complex (miRISC), with the miRNAs serving as a guide to direct the miRISC to complementary RNAs to degrade them or prevent their translation. Independently of its catalytic activity, functions in the siRNA silencing pathway by promoting assembly of the siRNA-directed Argonaute 2 (AGO2)-containing RISC (siRISC). Required for the proper formation of a stable intermediate (R2) in siRISC assembly, which is formed from the R1 precursor complex (containing Dcr-2, R2D2 and the siRNA) and is used for assembly of the mature (R3) siRISC complex. It is not required for siRNA biogenesis. During embryogenesis, involved in germline fate determination. Post-transcriptionally regulates mei-P26 expression through the microRNA pathway, which in turn post-translationally regulates myc protein levels; involved in regulating cell and tissue growth. This Drosophila melanogaster (Fruit fly) protein is Endoribonuclease Dcr-1.